A 235-amino-acid chain; its full sequence is Sugar fermentation stimulation protein homolog (235 aa).

Belongs to the SfsA family.

In Ectopseudomonas mendocina (strain ymp) (Pseudomonas mendocina), this protein is Sugar fermentation stimulation protein homolog.